A 139-amino-acid polypeptide reads, in one-letter code: Large-conductance mechanosensitive channel 1 (139 aa).

The next 3 helical transmembrane spans lie at 8-28 (FISK…AAFG), 30-50 (IVDS…FGGL), and 81-101 (GSFI…FLMV).

Belongs to the MscL family. Homopentamer.

The protein localises to the cell inner membrane. Functionally, channel that opens in response to stretch forces in the membrane lipid bilayer. May participate in the regulation of osmotic pressure changes within the cell. The polypeptide is Large-conductance mechanosensitive channel 1 (Mesorhizobium japonicum (strain LMG 29417 / CECT 9101 / MAFF 303099) (Mesorhizobium loti (strain MAFF 303099))).